Consider the following 409-residue polypeptide: LL-diaminopimelate aminotransferase (409 aa).

Residues Tyr15 and Gly42 each contribute to the substrate site. Pyridoxal 5'-phosphate contacts are provided by residues Tyr72, 108 to 109, Tyr132, Asn186, Tyr217, and 245 to 247; these read AK and SFS. Positions 109, 132, and 186 each coordinate substrate. Lys248 bears the N6-(pyridoxal phosphate)lysine mark. Residues Arg256 and Asn291 each contribute to the pyridoxal 5'-phosphate site. The substrate site is built by Asn291 and Arg387.

This sequence belongs to the class-I pyridoxal-phosphate-dependent aminotransferase family. LL-diaminopimelate aminotransferase subfamily. As to quaternary structure, homodimer. The cofactor is pyridoxal 5'-phosphate.

It carries out the reaction (2S,6S)-2,6-diaminopimelate + 2-oxoglutarate = (S)-2,3,4,5-tetrahydrodipicolinate + L-glutamate + H2O + H(+). Its pathway is amino-acid biosynthesis; L-lysine biosynthesis via DAP pathway; LL-2,6-diaminopimelate from (S)-tetrahydrodipicolinate (aminotransferase route): step 1/1. In terms of biological role, involved in the synthesis of meso-diaminopimelate (m-DAP or DL-DAP), required for both lysine and peptidoglycan biosynthesis. Catalyzes the direct conversion of tetrahydrodipicolinate to LL-diaminopimelate. The chain is LL-diaminopimelate aminotransferase from Parabacteroides distasonis (strain ATCC 8503 / DSM 20701 / CIP 104284 / JCM 5825 / NCTC 11152).